Consider the following 282-residue polypeptide: MAVPETRPNHTIYINNLNEKIKKDELKKSLYAIFSQFGQILDILVSRSLKMRGQAFVIFKEVSSATNALRSMQGFPFYDKPMRIQYAKTDSDIIAKMKGTFVERDRKREKRKPKSQETPATKKAVQGGGATPVVGAVQGPVPGMPPMTQAPRIMHHMPGQPPYMPPPGMIPPPGLAPGQIPPGAMPPQQLMPGQMPPAQPLSENPPNHILFLTNLPEETNELMLSMLFNQFPGFKEVRLVPGRHDIAFVEFDNEVQAGAARDALQGFKITQNNAMKISFAKK.

Position 2 is an N-acetylalanine (A2). Positions H10 to T89 constitute an RRM 1 domain. K60 is subject to N6-acetyllysine. The interval T100–P132 is disordered. Residue T131 is modified to Phosphothreonine. Residue R152 is modified to Omega-N-methylarginine. Residues H208–K282 form the RRM 2 domain.

This sequence belongs to the RRM U1 A/B'' family. As to quaternary structure, U1 snRNP is composed of the 7 core Sm proteins SNRPB, SNRPD1, SNRPD2, SNRPD3, SNRPE, SNRPF and SNRPG that assemble in a heptameric protein ring on the Sm site of the small nuclear RNA to form the core snRNP, and at least three U1 snRNP-specific proteins SNRNP70/U1-70K, SNRPA/U1-A and SNRPC/U1-C. Interacts with SFPQ; component of a snRNP-free complex with SFPQ. Interacts with IVNS1ABP (via BACK domain); the interaction is indirect.

Its subcellular location is the nucleus. In terms of biological role, component of the spliceosomal U1 snRNP, which is essential for recognition of the pre-mRNA 5' splice-site and the subsequent assembly of the spliceosome. U1 snRNP is the first snRNP to interact with pre-mRNA. This interaction is required for the subsequent binding of U2 snRNP and the U4/U6/U5 tri-snRNP. SNRPA binds stem loop II of U1 snRNA. In a snRNP-free form (SF-A) may be involved in coupled pre-mRNA splicing and polyadenylation process. May bind preferentially to the 5'-UGCAC-3' motif on RNAs. This chain is U1 small nuclear ribonucleoprotein A (SNRPA), found in Homo sapiens (Human).